Reading from the N-terminus, the 208-residue chain is Ribosomal RNA small subunit methyltransferase G (208 aa).

Residues G76, L81, 127–128, and R142 contribute to the S-adenosyl-L-methionine site; that span reads VE.

This sequence belongs to the methyltransferase superfamily. RNA methyltransferase RsmG family.

The protein localises to the cytoplasm. It catalyses the reaction guanosine(527) in 16S rRNA + S-adenosyl-L-methionine = N(7)-methylguanosine(527) in 16S rRNA + S-adenosyl-L-homocysteine. In terms of biological role, specifically methylates the N7 position of guanine in position 527 of 16S rRNA. The polypeptide is Ribosomal RNA small subunit methyltransferase G (Legionella pneumophila (strain Lens)).